The following is a 416-amino-acid chain: Glutamyl-tRNA reductase (416 aa).

Substrate contacts are provided by residues 46 to 49 (TCNR), S97, 102 to 104 (DHE), and Q108. Residue C47 is the Nucleophile of the active site. 178-183 (GAGMAA) is a binding site for NADP(+).

It belongs to the glutamyl-tRNA reductase family. In terms of assembly, homodimer.

It catalyses the reaction (S)-4-amino-5-oxopentanoate + tRNA(Glu) + NADP(+) = L-glutamyl-tRNA(Glu) + NADPH + H(+). The protein operates within porphyrin-containing compound metabolism; protoporphyrin-IX biosynthesis; 5-aminolevulinate from L-glutamyl-tRNA(Glu): step 1/2. Functionally, catalyzes the NADPH-dependent reduction of glutamyl-tRNA(Glu) to glutamate 1-semialdehyde (GSA). The sequence is that of Glutamyl-tRNA reductase from Aeropyrum pernix (strain ATCC 700893 / DSM 11879 / JCM 9820 / NBRC 100138 / K1).